The following is a 217-amino-acid chain: Large ribosomal subunit protein uL1 (217 aa).

This sequence belongs to the universal ribosomal protein uL1 family.

The polypeptide is Large ribosomal subunit protein uL1 (RPL10A) (Eremothecium gossypii (strain ATCC 10895 / CBS 109.51 / FGSC 9923 / NRRL Y-1056) (Yeast)).